The chain runs to 194 residues: MDVHNVEMVMSAVSASQYPTDGKPEIALVGRSNVGKSSLTNTLIQRKNFARTSSQPGKTQTLNFYDVEDKLYFVDVPGYGYAKVSKAQREAFGVMIEEYITSRKQLRGVISLVDARHEPSEDDISMYEWLHYYNIPILVVATKSDKISRGKFNKAESVIKKALGFDNEDSDFQFFSSETKYGKDEVWHWIEQHI.

The region spanning 22-194 (GKPEIALVGR…EVWHWIEQHI (173 aa)) is the EngB-type G domain. GTP-binding positions include 30 to 37 (GRSNVGKS), 57 to 61 (GKTQT), 75 to 78 (DVPG), 142 to 145 (TKSD), and 175 to 177 (FSS). Positions 37 and 59 each coordinate Mg(2+).

Belongs to the TRAFAC class TrmE-Era-EngA-EngB-Septin-like GTPase superfamily. EngB GTPase family. The cofactor is Mg(2+).

In terms of biological role, necessary for normal cell division and for the maintenance of normal septation. The sequence is that of Probable GTP-binding protein EngB from Leuconostoc mesenteroides subsp. mesenteroides (strain ATCC 8293 / DSM 20343 / BCRC 11652 / CCM 1803 / JCM 6124 / NCDO 523 / NBRC 100496 / NCIMB 8023 / NCTC 12954 / NRRL B-1118 / 37Y).